The primary structure comprises 144 residues: Large ribosomal subunit protein uL14 (144 aa).

The protein belongs to the universal ribosomal protein uL14 family. In terms of assembly, part of the 50S ribosomal subunit. Forms a cluster with proteins L3 and L24e, part of which may contact the 16S rRNA in 2 intersubunit bridges.

Functionally, binds to 23S rRNA. Forms part of two intersubunit bridges in the 70S ribosome. This chain is Large ribosomal subunit protein uL14, found in Pyrobaculum aerophilum (strain ATCC 51768 / DSM 7523 / JCM 9630 / CIP 104966 / NBRC 100827 / IM2).